Here is a 132-residue protein sequence, read N- to C-terminus: Small ribosomal subunit protein uS8 (132 aa).

Belongs to the universal ribosomal protein uS8 family. Part of the 30S ribosomal subunit. Contacts proteins S5 and S12.

Its function is as follows. One of the primary rRNA binding proteins, it binds directly to 16S rRNA central domain where it helps coordinate assembly of the platform of the 30S subunit. The polypeptide is Small ribosomal subunit protein uS8 (Rickettsia conorii (strain ATCC VR-613 / Malish 7)).